A 220-amino-acid chain; its full sequence is Metalloproteinase inhibitor 2 (220 aa).

Residues Met-1–Ala-26 form the signal peptide. Position 27 (Cys-27) interacts with Zn(2+). The tract at residues Cys-27–Ser-30 is involved in metalloproteinase-binding. Cystine bridges form between Cys-27–Cys-98, Cys-29–Cys-127, Cys-39–Cys-152, Cys-154–Cys-201, Cys-159–Cys-164, and Cys-172–Cys-193. Residues Cys-27–Cys-152 enclose the NTR domain.

It belongs to the protease inhibitor I35 (TIMP) family. As to quaternary structure, interacts (via the C-terminal) with MMP2 (via the C-terminal PEX domain); the interaction inhibits the MMP2 activity. Post-translationally, the activity of TIMP2 is dependent on the presence of disulfide bonds.

The protein localises to the secreted. Complexes with metalloproteinases (such as collagenases) and irreversibly inactivates them by binding to their catalytic zinc cofactor. The protein is Metalloproteinase inhibitor 2 (TIMP2) of Bos taurus (Bovine).